The following is a 402-amino-acid chain: Zinc finger CCHC domain-containing protein 12 (402 aa).

Residues 308–341 are disordered; that stretch reads IDSPHNSRAQFPSTSGGSGYKNNGPGEMRRARKR. Residues 311-322 are compositionally biased toward polar residues; that stretch reads PHNSRAQFPSTS. The CCHC-type zinc finger occupies 345-362; that stretch reads IRCSYCGEEGHSKETCDN.

This sequence belongs to the ZCCHC12 family. As to quaternary structure, interacts with SMAD1 and CREB-binding protein (CBP). Forms a protein-DNA complex through its association with SMAD1.

Transcriptional coactivator in the bone morphogenetic protein (BMP)-signaling pathway. It positively modulates BMP signaling by interacting with SMAD1 and associating with CBP in the transcription complex. It contributes to the BMP-induced enhancement of cholinergic-neuron-specific gene expression. In Homo sapiens (Human), this protein is Zinc finger CCHC domain-containing protein 12 (ZCCHC12).